A 108-amino-acid chain; its full sequence is Synaptic plasticity regulator PANTS (108 aa).

Residues 58–108 (KNHSTQAKDSLQESERKRLADQRKFTPVWELRQKPPSDWHLPLNQGEPQDP) are disordered. Residues 67–81 (SLQESERKRLADQRK) are compositionally biased toward basic and acidic residues.

The protein belongs to the UPF0545 family. In terms of processing, rapidly degraded by proteolysis following neuronal stimulation, resulting in increased AMPA receptor clustering.

It is found in the synapse. Its subcellular location is the synaptic cleft. Functionally, negatively regulates long-term potentiation and modulates adult synaptic plasticity. This Danio rerio (Zebrafish) protein is Synaptic plasticity regulator PANTS.